The primary structure comprises 427 residues: Adenylosuccinate synthetase (427 aa).

GTP contacts are provided by residues 12 to 18 (GDEGKGK) and 40 to 42 (GHT). The Proton acceptor role is filled by Asp13. Mg(2+) is bound by residues Asp13 and Gly40. Residues 13-16 (DEGK), 38-41 (NAGH), Thr128, Arg142, Gln223, Thr238, and Arg302 each bind IMP. Catalysis depends on His41, which acts as the Proton donor. 298–304 (TTTGRPR) serves as a coordination point for substrate. GTP-binding positions include Arg304, 330 to 332 (KLD), and 412 to 414 (SVG).

This sequence belongs to the adenylosuccinate synthetase family. Homodimer. Mg(2+) is required as a cofactor.

It is found in the cytoplasm. The catalysed reaction is IMP + L-aspartate + GTP = N(6)-(1,2-dicarboxyethyl)-AMP + GDP + phosphate + 2 H(+). Its pathway is purine metabolism; AMP biosynthesis via de novo pathway; AMP from IMP: step 1/2. Functionally, plays an important role in the de novo pathway of purine nucleotide biosynthesis. Catalyzes the first committed step in the biosynthesis of AMP from IMP. The chain is Adenylosuccinate synthetase from Carboxydothermus hydrogenoformans (strain ATCC BAA-161 / DSM 6008 / Z-2901).